A 329-amino-acid chain; its full sequence is uncharacterized protein (329 aa).

One can recognise a Nudix hydrolase domain in the interval 27 to 185 (PRRASVAVII…IQIDSSRALK (159 aa)). A run of 3 helical transmembrane segments spans residues 123–143 (VITS…VFIL), 227–247 (PFLR…LSPS), and 303–323 (LTLL…FLII).

Its subcellular location is the membrane. This is an uncharacterized protein from Schizosaccharomyces pombe (strain 972 / ATCC 24843) (Fission yeast).